Reading from the N-terminus, the 222-residue chain is Charged multivesicular body protein 4a (222 aa).

Disordered stretches follow at residues 1–21 and 177–222; these read MSGL…TPEE and LLHV…EWVS. The interval 1–116 is interaction with phosphoinosides; sequence MSGLGRLFGR…ELAAQGLKKA (116 aa). Residues 1-150 form an intramolecular interaction with C-terminus region; sequence MSGLGRLFGR…QISDAISRPV (150 aa). Coiled-coil stretches lie at residues 20–105 and 155–180; these read EEAI…VLRT and DVDE…LLHV. The segment at 151–222 is intramolecular interaction with N-terminus; the sequence is GFGDDVDEDE…ELKQLAEWVS (72 aa). A Phosphoserine modification is found at S196.

Belongs to the SNF7 family. As to quaternary structure, probable core component of the endosomal sorting required for transport complex III (ESCRT-III). ESCRT-III components are thought to multimerize to form a flat lattice on the perimeter membrane of the endosome. Several assembly forms of ESCRT-III may exist that interact and act sequentially. Self-associates; overexpression leads to the assembly of filaments that curve and associate to create circular rings. Interacts with CHMP2A. Interacts with CHMP3; the interaction requires the release of CHMP4A autoinhibition. Interacts with CHMP4B. Interacts with CHMP4C. Interacts with CHMP6. Interacts with VPS4A. Interacts with PDCD6IP; the interaction is direct.

The protein resides in the cytoplasmic vesicle membrane. The protein localises to the late endosome membrane. Its function is as follows. Probable core component of the endosomal sorting required for transport complex III (ESCRT-III) which is involved in multivesicular bodies (MVBs) formation and sorting of endosomal cargo proteins into MVBs. MVBs contain intraluminal vesicles (ILVs) that are generated by invagination and scission from the limiting membrane of the endosome and mostly are delivered to lysosomes enabling degradation of membrane proteins, such as stimulated growth factor receptors, lysosomal enzymes and lipids. The MVB pathway appears to require the sequential function of ESCRT-O, -I,-II and -III complexes. ESCRT-III proteins mostly dissociate from the invaginating membrane before the ILV is released. The ESCRT machinery also functions in topologically equivalent membrane fission events, such as the terminal stages of cytokinesis and the budding of enveloped viruses (lentiviruses). ESCRT-III proteins are believed to mediate the necessary vesicle extrusion and/or membrane fission activities, possibly in conjunction with the AAA ATPase VPS4. When overexpressed, membrane-assembled circular arrays of CHMP4A filaments can promote or stabilize negative curvature and outward budding. CHMP4A/B/C are required for the exosomal release of SDCBP, CD63 and syndecan. The protein is Charged multivesicular body protein 4a (CHMP4A) of Bos taurus (Bovine).